A 337-amino-acid polypeptide reads, in one-letter code: D-alanine--D-alanine ligase (337 aa).

The region spanning 124–330 is the ATP-grasp domain; the sequence is KMWFSALGIP…FTEYLSLVIN (207 aa). 154 to 209 lines the ATP pocket; it reads ALAQWGSIFVKAASQGSSVGCYKVDDSAKVAGVLKDAFGYAPYVIVEKTIKARELE. Residues aspartate 284, glutamate 297, and asparagine 299 each contribute to the Mg(2+) site.

Belongs to the D-alanine--D-alanine ligase family. The cofactor is Mg(2+). Requires Mn(2+) as cofactor.

Its subcellular location is the cytoplasm. The enzyme catalyses 2 D-alanine + ATP = D-alanyl-D-alanine + ADP + phosphate + H(+). It functions in the pathway cell wall biogenesis; peptidoglycan biosynthesis. Cell wall formation. The chain is D-alanine--D-alanine ligase from Shewanella baltica (strain OS223).